Consider the following 713-residue polypeptide: Polyribonucleotide nucleotidyltransferase (713 aa).

Mg(2+)-binding residues include aspartate 498 and aspartate 504. The 67-residue stretch at 565–631 folds into the KH domain; the sequence is PRILSLKVPV…RIEDLTREAK (67 aa). The S1 motif domain maps to 633 to 701; sequence GEIYEGTVTR…ERGKIDLIRP (69 aa).

This sequence belongs to the polyribonucleotide nucleotidyltransferase family. Mg(2+) serves as cofactor.

The protein resides in the cytoplasm. The catalysed reaction is RNA(n+1) + phosphate = RNA(n) + a ribonucleoside 5'-diphosphate. Its function is as follows. Involved in mRNA degradation. Catalyzes the phosphorolysis of single-stranded polyribonucleotides processively in the 3'- to 5'-direction. The protein is Polyribonucleotide nucleotidyltransferase of Thermus thermophilus (strain ATCC 27634 / DSM 579 / HB8).